We begin with the raw amino-acid sequence, 320 residues long: MGTPFKMERGVKYRDAAKTSIIPVKNIDPNQELLKKPEWMKIKLPANSAKIESIKNGMRRHGLHSVCEEASCPNLHECFNHGTATFMIMGAICTRRCPFCDVAHGKPLPLDKDEPKKLAETIQDMKLKYVVITSVDRDDLPDRGAGHFAECVKEIRALNPGIKIEILVPDFRGRVEQAIEILKENPPDVFNHNLENVPRLYKEIRPGADYEWSLKLLKEFKAVFPDIPTKSGIMVGLGETNEEILQVMQDLRDHGVTMLTLGQYLQPSRHHLPVARYVHPTEFDMFREKANEMGFEHAACGPFVRSSYHADLQASGGLVK.

[4Fe-4S] cluster contacts are provided by Cys-67, Cys-72, Cys-78, Cys-93, Cys-97, Cys-100, and Ser-307. The region spanning 79–296 is the Radical SAM core domain; the sequence is FNHGTATFMI…REKANEMGFE (218 aa).

This sequence belongs to the radical SAM superfamily. Lipoyl synthase family. Requires [4Fe-4S] cluster as cofactor.

The protein localises to the cytoplasm. The catalysed reaction is [[Fe-S] cluster scaffold protein carrying a second [4Fe-4S](2+) cluster] + N(6)-octanoyl-L-lysyl-[protein] + 2 oxidized [2Fe-2S]-[ferredoxin] + 2 S-adenosyl-L-methionine + 4 H(+) = [[Fe-S] cluster scaffold protein] + N(6)-[(R)-dihydrolipoyl]-L-lysyl-[protein] + 4 Fe(3+) + 2 hydrogen sulfide + 2 5'-deoxyadenosine + 2 L-methionine + 2 reduced [2Fe-2S]-[ferredoxin]. It functions in the pathway protein modification; protein lipoylation via endogenous pathway; protein N(6)-(lipoyl)lysine from octanoyl-[acyl-carrier-protein]: step 2/2. Its function is as follows. Catalyzes the radical-mediated insertion of two sulfur atoms into the C-6 and C-8 positions of the octanoyl moiety bound to the lipoyl domains of lipoate-dependent enzymes, thereby converting the octanoylated domains into lipoylated derivatives. This Glaesserella parasuis serovar 5 (strain SH0165) (Haemophilus parasuis) protein is Lipoyl synthase.